Here is a 512-residue protein sequence, read N- to C-terminus: Cytokinin hydroxylase (512 aa).

Residues 2–22 (MVTLVLKYVLVIVMTLILRVL) form a helical membrane-spanning segment. Cys-458 is a heme binding site.

It belongs to the cytochrome P450 family. Heme serves as cofactor. In terms of tissue distribution, specifically expressed in roots.

The protein localises to the membrane. The enzyme catalyses N(6)-(dimethylallyl)adenosine 5'-phosphate + NADPH + O2 + H(+) = 9-ribosyl-trans-zeatin 5'-phosphate + NADP(+) + H2O. It catalyses the reaction N(6)-(dimethylallyl)adenosine 5'-diphosphate + NADPH + O2 + H(+) = 9-ribosyl-trans-zeatin 5'-diphosphate + NADP(+) + H2O. It carries out the reaction N(6)-(dimethylallyl)adenosine 5'-triphosphate + NADPH + O2 + H(+) = 9-ribosyl-trans-zeatin 5'-triphosphate + NADP(+) + H2O. Its function is as follows. Cytokinin hydroxylase that catalyzes the biosynthesis of trans-zeatin via the isopentenyladenine riboside 5'-monophosphate (iPRMP)-dependent pathway. Can use isopentenyladenosine-5'-monophosphate, isopentenyladenosine-5'-diphosphate and isopentenyladenosine-5'-triphosphate as substrate. In Arabidopsis thaliana (Mouse-ear cress), this protein is Cytokinin hydroxylase (CYP735A2).